Here is a 98-residue protein sequence, read N- to C-terminus: UPF0251 protein Sputcn32_0687 (98 aa).

It belongs to the UPF0251 family.

The chain is UPF0251 protein Sputcn32_0687 from Shewanella putrefaciens (strain CN-32 / ATCC BAA-453).